The sequence spans 81 residues: Large ribosomal subunit protein bL31B (81 aa).

This sequence belongs to the bacterial ribosomal protein bL31 family. Type B subfamily. Part of the 50S ribosomal subunit.

The polypeptide is Large ribosomal subunit protein bL31B (Cutibacterium acnes (strain DSM 16379 / KPA171202) (Propionibacterium acnes)).